We begin with the raw amino-acid sequence, 199 residues long: Interleukin-11 (199 aa).

A signal peptide spans 1-21; that stretch reads MNCVCRLVLVVLSLWPDTAVA. An important for interaction with IL11RA and for the stimulation of cell proliferation region spans residues 182-190; that stretch reads HLTLDWAVR.

This sequence belongs to the IL-6 superfamily. As to quaternary structure, interacts with IL11RA to associate with IL6ST, giving rise to a multimeric signaling complex.

It localises to the secreted. Its function is as follows. Cytokine that stimulates the proliferation of hematopoietic stem cells and megakaryocyte progenitor cells and induces megakaryocyte maturation resulting in increased platelet production. Also promotes the proliferation of hepatocytes in response to liver damage. Binding to its receptor formed by IL6ST and IL11RA activates a signaling cascade that promotes cell proliferation. Signaling leads to the activation of intracellular protein kinases and the phosphorylation of STAT3. The interaction with the membrane-bound IL11RA and IL6ST stimulates 'classic signaling', whereas the binding of IL11 and soluble IL11RA to IL6ST stimulates 'trans-signaling'. The sequence is that of Interleukin-11 from Homo sapiens (Human).